Reading from the N-terminus, the 63-residue chain is Large ribosomal subunit protein uL29 (63 aa).

This sequence belongs to the universal ribosomal protein uL29 family.

This chain is Large ribosomal subunit protein uL29, found in Sodalis glossinidius (strain morsitans).